The chain runs to 97 residues: Large ribosomal subunit protein eL21 (97 aa).

Residues 1-24 are compositionally biased toward basic residues; that stretch reads MVQKPHSFRRKTRKKLRKHPRRRG. Residues 1–25 form a disordered region; the sequence is MVQKPHSFRRKTRKKLRKHPRRRGL.

It belongs to the eukaryotic ribosomal protein eL21 family.

The protein is Large ribosomal subunit protein eL21 (rpl21e) of Pyrococcus horikoshii (strain ATCC 700860 / DSM 12428 / JCM 9974 / NBRC 100139 / OT-3).